Consider the following 263-residue polypeptide: 3-methyl-2-oxobutanoate hydroxymethyltransferase (263 aa).

The Mg(2+) site is built by D45 and D84. 3-methyl-2-oxobutanoate contacts are provided by residues 45–46, D84, and K112; that span reads DS. E114 contributes to the Mg(2+) binding site. The Proton acceptor role is filled by E181.

It belongs to the PanB family. In terms of assembly, homodecamer; pentamer of dimers. Requires Mg(2+) as cofactor.

The protein localises to the cytoplasm. It carries out the reaction 3-methyl-2-oxobutanoate + (6R)-5,10-methylene-5,6,7,8-tetrahydrofolate + H2O = 2-dehydropantoate + (6S)-5,6,7,8-tetrahydrofolate. The protein operates within cofactor biosynthesis; (R)-pantothenate biosynthesis; (R)-pantoate from 3-methyl-2-oxobutanoate: step 1/2. Functionally, catalyzes the reversible reaction in which hydroxymethyl group from 5,10-methylenetetrahydrofolate is transferred onto alpha-ketoisovalerate to form ketopantoate. This chain is 3-methyl-2-oxobutanoate hydroxymethyltransferase, found in Proteus mirabilis (strain HI4320).